Consider the following 185-residue polypeptide: Prorelaxin 1 (185 aa).

An N-terminal signal peptide occupies residues 1 to 22 (MSSRFLLQLLGFWLLLSQPCRT). Intrachain disulfides connect C36-C171, C48-C185, and C170-C175. A propeptide spans 58–156 (SQEEPALLAR…LKYLQSDTHS (99 aa)) (connecting peptide). The disordered stretch occupies residues 135–161 (RLGEAEDGSPPGLKYLQSDTHSRKKRE).

Belongs to the insulin family. In terms of assembly, heterodimer of a B chain and an A chain linked by two disulfide bonds.

The protein localises to the secreted. In terms of biological role, relaxin is an ovarian hormone that acts with estrogen to produce dilatation of the birth canal in many mammals. The sequence is that of Prorelaxin 1 (Rln1) from Mus musculus (Mouse).